The primary structure comprises 252 residues: Phosphate import ATP-binding protein PstB (252 aa).

The region spanning Ile-6 to Ile-247 is the ABC transporter domain. ATP is bound at residue Gly-38–Ser-45.

It belongs to the ABC transporter superfamily. Phosphate importer (TC 3.A.1.7) family. The complex is composed of two ATP-binding proteins (PstB), two transmembrane proteins (PstC and PstA) and a solute-binding protein (PstS).

The protein localises to the cell inner membrane. The catalysed reaction is phosphate(out) + ATP + H2O = ADP + 2 phosphate(in) + H(+). Part of the ABC transporter complex PstSACB involved in phosphate import. Responsible for energy coupling to the transport system. This chain is Phosphate import ATP-binding protein PstB, found in Bacteroides thetaiotaomicron (strain ATCC 29148 / DSM 2079 / JCM 5827 / CCUG 10774 / NCTC 10582 / VPI-5482 / E50).